Here is a 365-residue protein sequence, read N- to C-terminus: DNA replication and repair protein RecF (365 aa).

ATP is bound at residue 30-37 (GRNAQGKT).

Belongs to the RecF family.

It localises to the cytoplasm. Functionally, the RecF protein is involved in DNA metabolism; it is required for DNA replication and normal SOS inducibility. RecF binds preferentially to single-stranded, linear DNA. It also seems to bind ATP. This chain is DNA replication and repair protein RecF, found in Streptococcus pneumoniae serotype 4 (strain ATCC BAA-334 / TIGR4).